The sequence spans 365 residues: Spore germination protein A2 (365 aa).

11 helical membrane-spanning segments follow: residues 12 to 32, 45 to 65, 85 to 105, 122 to 142, 148 to 168, 187 to 207, 223 to 243, 250 to 270, 275 to 295, 303 to 323, and 338 to 358; these read TFQG…LTLP, WITL…NTLI, WIGS…ASFE, PIQV…VGGL, LFPF…GISF, IANS…MLFL, LGFL…VGAL, TLIW…IFIE, FLLV…GYFA, FGLS…YFSL, and LGYI…IVAL.

This sequence belongs to the amino acid-polyamine-organocation (APC) superfamily. Spore germination protein (SGP) (TC 2.A.3.9) family.

The protein localises to the cell membrane. Involved in the germinative response to L-alanine. Could be an amino acid transporter. Forms a complex at the inner spore membrane which acts as a receptor for L-alanine, thus is involved in the stimulation of germination in response to alanine. Can stimulate germination in the absence of gerD and gerK gene products (fructose and glucose receptors, respectively), but the response is improved in their presence. The sequence is that of Spore germination protein A2 (gerAB) from Bacillus subtilis (strain 168).